We begin with the raw amino-acid sequence, 371 residues long: F-box protein At2g26850 (371 aa).

The F-box domain occupies K59 to H105.

This is F-box protein At2g26850 from Arabidopsis thaliana (Mouse-ear cress).